Here is a 602-residue protein sequence, read N- to C-terminus: Arginine--tRNA ligase (602 aa).

Residues 138–148 carry the 'HIGH' region motif; that stretch reads ANPTGPMHVGH.

Belongs to the class-I aminoacyl-tRNA synthetase family. Monomer.

The protein resides in the cytoplasm. The catalysed reaction is tRNA(Arg) + L-arginine + ATP = L-arginyl-tRNA(Arg) + AMP + diphosphate. The protein is Arginine--tRNA ligase of Gluconobacter oxydans (strain 621H) (Gluconobacter suboxydans).